A 2009-amino-acid polypeptide reads, in one-letter code: Sodium channel protein type 1 subunit alpha (2009 aa).

Over 1 to 128 the chain is Cytoplasmic; sequence MEQTVLVPPG…KIAIKILVHS (128 aa). Residues 28–48 are compositionally biased toward basic and acidic residues; the sequence is RIAEEKAKNPKPDKKDDDENG. Residues 28-60 are disordered; sequence RIAEEKAKNPKPDKKDDDENGPKPNSDLEAGKN. One copy of the I repeat lies at 110–454; it reads ILTPFNPLRK…QQMLEQLKKQ (345 aa). Residues 129-146 form a helical membrane-spanning segment; that stretch reads LFSMLIMCTILTNCVFMT. The Extracellular segment spans residues 147-152; the sequence is MSNPPD. Residues 153–177 traverse the membrane as a helical segment; it reads WTKNVEYTFTGIYTFESLIKIIARG. Over 178-188 the chain is Cytoplasmic; sequence FCLEDFTFLRD. The chain crosses the membrane as a helical span at residues 189-205; sequence PWNWLDFTVITFAYVTE. Residues 206-213 lie on the Extracellular side of the membrane; the sequence is FVDLGNVS. Residues 214-235 form a helical membrane-spanning segment; that stretch reads ALRTFRVLRALKTISVIPGLKT. Residues 236-245 lie on the Cytoplasmic side of the membrane; sequence IVGALIQSVK. The chain crosses the membrane as a helical span at residues 246 to 269; it reads KLSDVMILTVFCLSVFALIGLQLF. Topologically, residues 270–369 are extracellular; the sequence is MGNLRNKCVQ…YGYTSFDTFS (100 aa). 2 disulfides stabilise this stretch: Cys-277-Cys-345 and Cys-336-Cys-351. Residues Asn-295, Asn-301, Asn-306, and Asn-338 are each glycosylated (N-linked (GlcNAc...) asparagine). Positions 370-384 form an intramembrane region, pore-forming; that stretch reads WAFLSLFRLMTQDFW. Topologically, residues 385–397 are extracellular; it reads ENLYQLTLRAAGK. A helical transmembrane segment spans residues 398–423; that stretch reads TYMIFFVLVIFLGSFYLINLILAVVA. Residues 424–768 are Cytoplasmic-facing; sequence MAYEEQNQAT…HIVNLVVMDP (345 aa). Positions 455-528 are disordered; the sequence is QEAAQQAAAT…EFHKSESEDS (74 aa). Positions 456-466 are enriched in low complexity; sequence EAAQQAAATTA. Ser-470 is modified (phosphoserine). Over residues 479 to 492 the composition is skewed to low complexity; it reads LSDSSSEASKLSSK. Residues 495 to 506 show a composition bias toward basic residues; it reads KERRNRRKKRKQ. Positions 507-528 are enriched in basic and acidic residues; that stretch reads KEQSGGEEKDDDEFHKSESEDS. Phosphoserine is present on residues Ser-523, Ser-525, Ser-550, Ser-551, Ser-607, and Ser-730. Residues 584–627 form a disordered region; sequence VGSENDFADDEHSTFEDNESRRDSLFVPRRHGERRNSNLSQTSR. Positions 593–607 are enriched in basic and acidic residues; that stretch reads DEHSTFEDNESRRDS. The stretch at 750–1022 is one II repeat; the sequence is CSPYWLKVKH…QIAVDRMHKG (273 aa). Residues 769–787 form a helical membrane-spanning segment; sequence FVDLAITICIVLNTLFMAM. The Extracellular portion of the chain corresponds to 788–797; the sequence is EHYPMTEHFN. Residues 798-820 form a helical membrane-spanning segment; that stretch reads HVLTVGNLVFTGIFTAEMFLKII. Over 821–830 the chain is Cytoplasmic; that stretch reads AMDPYYYFQE. Residues 831–849 form a helical membrane-spanning segment; the sequence is GWNIFDGFIVTLSLVELGL. Topologically, residues 850-854 are extracellular; it reads ANVEG. Residues 855-874 form a helical membrane-spanning segment; it reads LSVLRSFRLLRVFKLAKSWP. Residues 875-891 are Cytoplasmic-facing; it reads TLNMLIKIIGNSVGALG. Residues 892–912 traverse the membrane as a helical segment; sequence NLTLVLAIIVFIFAVVGMQLF. At 913–938 the chain is on the extracellular side; that stretch reads GKSYKDCVCKIATDCKLPRWHMNDFF. Cys-921 and Cys-927 are joined by a disulfide. The segment at residues 939–952 is an intramembrane region (pore-forming); it reads HSFLIVFRVLCGEW. Over 953 to 965 the chain is Extracellular; sequence IETMWDCMEVAGQ. Cysteines 959 and 968 form a disulfide. The chain crosses the membrane as a helical span at residues 966 to 992; sequence AMCLTVFMMVMVIGNLVVLNLFLALLL. The Cytoplasmic segment spans residues 993–1218; that stretch reads SSFSADNLAA…RTCFRIVEHN (226 aa). Residues 1129-1163 are disordered; that stretch reads TEDFSSESDLEESKEKLNESSSSSEGSTVDIGAPA. Residues 1200–1514 form an III repeat; that stretch reads RGKQWWNLRR…KKYYNAMKKL (315 aa). Residues 1219–1237 traverse the membrane as a helical segment; the sequence is WFETFIVFMILLSSGALAF. Residues 1238–1250 lie on the Extracellular side of the membrane; that stretch reads EDIYIDQRKTIKT. Residues 1251–1276 form a helical membrane-spanning segment; it reads MLEYADKVFTYIFILEMLLKWVAYGY. The Cytoplasmic portion of the chain corresponds to 1277 to 1278; it reads QT. A helical membrane pass occupies residues 1279–1304; the sequence is YFTNAWCWLDFLIVDVSLVSLTANAL. Residues 1305-1313 lie on the Extracellular side of the membrane; that stretch reads GYSELGAIK. The helical transmembrane segment at 1314–1332 threads the bilayer; it reads SLRTLRALRPLRALSRFEG. The Cytoplasmic segment spans residues 1333–1345; that stretch reads MRVVVNALLGAIP. A helical transmembrane segment spans residues 1346-1369; the sequence is SIMNVLLVCLIFWLIFSIMGVNLF. The Extracellular segment spans residues 1370-1415; the sequence is AGKFYHCVNTTTGDIFEISEVNNHSDCLKLIERNETARWKNVKVNF. A disulfide bridge connects residues Cys-1376 and Cys-1396. An intramembrane region (pore-forming) is located at residues 1416 to 1433; it reads DNVGFGYLSLLQVATFKG. Over 1434 to 1457 the chain is Extracellular; it reads WMDIMYAAVDSRNVELQPKYEESL. A helical transmembrane segment spans residues 1458 to 1483; the sequence is YMYLYFVIFIIFGSFFTLNLFIGVII. Residues 1484–1541 are Cytoplasmic-facing; sequence DNFNQQKKKFGGQDIFMTEEQKKYYNAMKKLGSKKPQKPIPRPGNKFQGMVFDFVTRQ. Ser-1516 carries the phosphoserine; by PKC modification. The IV repeat unit spans residues 1523–1821; it reads IPRPGNKFQG…WEKFDPDATQ (299 aa). A helical transmembrane segment spans residues 1542-1560; the sequence is VFDISIMILICLNMVTMMV. The Extracellular segment spans residues 1561–1571; sequence ETDDQSDYVTS. Residues 1561-1571 form an S1-S2 loop of repeat IV region; sequence ETDDQSDYVTS. Residues 1572–1593 form a helical membrane-spanning segment; the sequence is ILSRINLVFIVLFTGECVLKLI. At 1594–1601 the chain is on the cytoplasmic side; it reads SLRHYYFT. A helical transmembrane segment spans residues 1602–1623; sequence IGWNIFDFVVVILSIVGMFLAE. Residues 1619–1636 form an S3b-S4 loop of repeat IV region; sequence MFLAELIEKYFVSPTLFR. At 1624-1636 the chain is on the extracellular side; that stretch reads LIEKYFVSPTLFR. Residues 1637 to 1655 traverse the membrane as a helical segment; sequence VIRLARIGRILRLIKGAKG. Residues 1656-1665 lie on the Cytoplasmic side of the membrane; it reads IRTLLFALMM. A helical transmembrane segment spans residues 1666–1688; sequence SLPALFNIGLLLFLVMFIYAIFG. Over 1689–1711 the chain is Extracellular; sequence MSNFAYVKREVGIDDMFNFETFG. Residues 1712 to 1726 constitute an intramembrane region (pore-forming); it reads NSMICLFQITTSAGW. At 1727 to 1759 the chain is on the extracellular side; the sequence is DGLLAPILNSKPPDCDPNKVNPGSSVKGDCGNP. The cysteines at positions 1741 and 1756 are disulfide-linked. Residues 1760–1788 form a helical membrane-spanning segment; sequence SVGIFFFVSYIIISFLVVVNMYIAVILEN. The Cytoplasmic segment spans residues 1789–2009; it reads FSVATEESAE…EGKDEKAKGK (221 aa). Residues 1915–1944 enclose the IQ domain; it reads EEVSAVIIQRAYRRHLLKRTVKQASFTYNK. Positions 1984–2009 are disordered; sequence PSYDRVTKPIVEKHEQEGKDEKAKGK. A compositionally biased stretch (basic and acidic residues) spans 1988–2009; it reads RVTKPIVEKHEQEGKDEKAKGK.

Belongs to the sodium channel (TC 1.A.1.10) family. Nav1.1/SCN1A subfamily. The Nav1.1 voltage-gated sodium channel consists of an ion-conducting alpha subunit SCN1A which is functional on its own regulated by one or more beta-1 (SCN1B), beta-2 (SCN2B), beta-3 (SCN3B) and beta-4 (SCN4B) subunits. SCN1B and SCN3B are non-covalently associated with SCN1A. SCN2B and SCN4B are disulfide-linked to SCN1A. SCN1B regulates both the expression at the plasma membrane and the voltage dependence of Nav1.1 inactivation. SCN3B and SCN4B reduce Nav1.1 conductance. Probably interacts with TMEM233; modulates the gating properties of NaV1.1. Interacts with FGF13; regulates the steady-state inactivation of Nav.1.1. In terms of processing, phosphorylation at Ser-1516 by PKC in a highly conserved cytoplasmic loop slows inactivation of the sodium channel and reduces peak sodium currents. In terms of tissue distribution, present in cerebellar Purkinje neurons (at protein level). Expressed by myelinated, non-C-fiber neurons in sensory ganglia.

It localises to the cell membrane. The enzyme catalyses Na(+)(in) = Na(+)(out). Activated by the spider toxins Hm1a and Hm1b (H.maculata, AC P60992 and AC P0DOC5) eliciting acute pain and mechanical allodynia. Its function is as follows. Pore-forming subunit of Nav1.1, a voltage-gated sodium (Nav) channel that directly mediates the depolarizing phase of action potentials in excitable membranes. Navs, also called VGSCs (voltage-gated sodium channels) or VDSCs (voltage-dependent sodium channels), operate by switching between closed and open conformations depending on the voltage difference across the membrane. In the open conformation they allow Na(+) ions to selectively pass through the pore, along their electrochemical gradient. The influx of Na(+) ions provokes membrane depolarization, initiating the propagation of electrical signals throughout cells and tissues. By regulating the excitability of neurons, ensures that they respond appropriately to synaptic inputs, maintaining the balance between excitation and inhibition in brain neural circuits. Nav1.1 plays a role in controlling the excitability and action potential propagation from somatosensory neurons, thereby contributing to the sensory perception of mechanically-induced pain. This is Sodium channel protein type 1 subunit alpha from Mus musculus (Mouse).